A 143-amino-acid chain; its full sequence is Large ribosomal subunit protein uL11 (143 aa).

It belongs to the universal ribosomal protein uL11 family. In terms of assembly, part of the ribosomal stalk of the 50S ribosomal subunit. Interacts with L10 and the large rRNA to form the base of the stalk. L10 forms an elongated spine to which L12 dimers bind in a sequential fashion forming a multimeric L10(L12)X complex. In terms of processing, one or more lysine residues are methylated.

Forms part of the ribosomal stalk which helps the ribosome interact with GTP-bound translation factors. This chain is Large ribosomal subunit protein uL11, found in Methylibium petroleiphilum (strain ATCC BAA-1232 / LMG 22953 / PM1).